Reading from the N-terminus, the 411-residue chain is Endo-1,4-beta-xylanase A (411 aa).

The first 33 residues, 1–33, serve as a signal peptide directing secretion; it reads MKKFKIRKLMARVLALALVFSTFFMVSKVDANA. The 349-residue stretch at 34–382 folds into the GH10 domain; it reads ASYNLMETYG…KPAYDEVVKA (349 aa). Residue glutamate 201 is the Proton donor of the active site. Glutamate 311 (nucleophile) is an active-site residue. The interval 387-411 is disordered; the sequence is FGNPGSFTPQPTITPQPTPTPSGQT. The span at 398-411 shows a compositional bias: pro residues; sequence TITPQPTPTPSGQT.

Belongs to the glycosyl hydrolase 10 (cellulase F) family.

The catalysed reaction is Endohydrolysis of (1-&gt;4)-beta-D-xylosidic linkages in xylans.. It functions in the pathway glycan degradation; xylan degradation. In terms of biological role, b.fibrisolvens is located in the rumen of ruminant animals, where it contributes to the animal's digestion of plant material by hydrolyzing hemicellulose with its xylanases. The polypeptide is Endo-1,4-beta-xylanase A (xynA) (Butyrivibrio fibrisolvens).